Here is a 157-residue protein sequence, read N- to C-terminus: Ribosome maturation factor RimP (157 aa).

This sequence belongs to the RimP family.

It is found in the cytoplasm. Its function is as follows. Required for maturation of 30S ribosomal subunits. This chain is Ribosome maturation factor RimP, found in Enterococcus faecalis (strain ATCC 700802 / V583).